The chain runs to 249 residues: Triosephosphate isomerase (249 aa).

8–10 (NWK) serves as a coordination point for substrate. Catalysis depends on His95, which acts as the Electrophile. Residue Glu163 is the Proton acceptor of the active site. Gly169 and Ser209 together coordinate substrate.

The protein belongs to the triosephosphate isomerase family. In terms of assembly, homodimer.

The protein resides in the cytoplasm. It carries out the reaction D-glyceraldehyde 3-phosphate = dihydroxyacetone phosphate. Its pathway is carbohydrate biosynthesis; gluconeogenesis. It functions in the pathway carbohydrate degradation; glycolysis; D-glyceraldehyde 3-phosphate from glycerone phosphate: step 1/1. Involved in the gluconeogenesis. Catalyzes stereospecifically the conversion of dihydroxyacetone phosphate (DHAP) to D-glyceraldehyde-3-phosphate (G3P). This Orientia tsutsugamushi (strain Ikeda) (Rickettsia tsutsugamushi) protein is Triosephosphate isomerase.